The sequence spans 61 residues: Metallothionein-I, hippocampal (61 aa).

N-acetylmethionine is present on methionine 1. The interval 1 to 29 is beta; the sequence is MDPNCSCATGDSCACASTCKCKECKCTSC. The a divalent metal cation site is built by cysteine 5, cysteine 7, cysteine 13, cysteine 15, cysteine 19, cysteine 21, cysteine 24, cysteine 26, cysteine 29, cysteine 33, cysteine 34, cysteine 36, cysteine 37, cysteine 41, cysteine 44, cysteine 48, cysteine 50, and cysteine 57. The alpha stretch occupies residues 30-61; the sequence is KKSCCSCCPVGCAKCAQGCICKGASDKCSCCA. At serine 58 the chain carries Phosphoserine. A divalent metal cation is bound by residues cysteine 59 and cysteine 60.

Belongs to the metallothionein superfamily. Type 1 family.

Functionally, metallothioneins have a high content of cysteine residues that bind various heavy metals; these proteins are transcriptionally regulated by both heavy metals and glucocorticoids. This isoform may play a role in regulating the transport, accumulation, and compartmentation of zinc in the hippocampus. The chain is Metallothionein-I, hippocampal from Bos taurus (Bovine).